A 175-amino-acid polypeptide reads, in one-letter code: Polyadenylate-binding protein-interacting protein 6 (175 aa).

Positions 7–17 (TLNPYAAAYVP) match the PAM2-like motif. One can recognise a CUE domain in the interval 83 to 126 (EMDMDIEYLLATYPGLSQESINDVYLANTCDLDATIEMLNQLEI). The tract at residues 145–175 (PEIITESSKQKNDGSSASSSSGIRNANVSSS) is disordered. The span at 166–175 (GIRNANVSSS) shows a compositional bias: polar residues.

This chain is Polyadenylate-binding protein-interacting protein 6 (CID6), found in Arabidopsis thaliana (Mouse-ear cress).